The chain runs to 981 residues: Beta-glucuronidase (981 aa).

Residue Glu500 is the Nucleophile of the active site. Mg(2+) contacts are provided by Asn561, Trp562, Ile563, Ser581, and Glu583.

It belongs to the glycosyl hydrolase 2 family.

The protein resides in the periplasm. The enzyme catalyses a beta-D-glucuronoside + H2O = D-glucuronate + an alcohol. Functionally, beta-glucuronidase involved in ulvan degradation. Ulvan is the main polysaccharide component of the Ulvales (green seaweed) cell wall. It is composed of disaccharide building blocks comprising 3-sulfated rhamnose (Rha3S) linked to D-glucuronic acid (GlcA), L-iduronic acid (IduA), or D-xylose (Xyl). Beta-glucuronidase removes GlcA side chains present on some O2 residues of Rha3S. Can remove the GlcA side chains from polymeric ulvan or from smaller oligomers. This is Beta-glucuronidase from Formosa agariphila (strain DSM 15362 / KCTC 12365 / LMG 23005 / KMM 3901 / M-2Alg 35-1).